Reading from the N-terminus, the 142-residue chain is Hemoglobin subunit alpha-1 (142 aa).

The region spanning 2 to 142 (VLSAADKSNV…VSTVLTSKYR (141 aa)) is the Globin domain. His-59 is a binding site for O2. His-88 is a heme b binding site.

The protein belongs to the globin family. In terms of assembly, heterotetramer of two alpha chains and two beta chains.

Functionally, involved in oxygen transport from the lung to the various peripheral tissues. Its function is as follows. Hemopressin acts as an antagonist peptide of the cannabinoid receptor CNR1. Hemopressin-binding efficiently blocks cannabinoid receptor CNR1 and subsequent signaling. The chain is Hemoglobin subunit alpha-1 (HBA1) from Capra hircus (Goat).